A 262-amino-acid polypeptide reads, in one-letter code: Acyl-[acyl-carrier-protein]--UDP-N-acetylglucosamine O-acyltransferase (262 aa).

It belongs to the transferase hexapeptide repeat family. LpxA subfamily. Homotrimer.

Its subcellular location is the cytoplasm. The enzyme catalyses a (3R)-hydroxyacyl-[ACP] + UDP-N-acetyl-alpha-D-glucosamine = a UDP-3-O-[(3R)-3-hydroxyacyl]-N-acetyl-alpha-D-glucosamine + holo-[ACP]. Its pathway is glycolipid biosynthesis; lipid IV(A) biosynthesis; lipid IV(A) from (3R)-3-hydroxytetradecanoyl-[acyl-carrier-protein] and UDP-N-acetyl-alpha-D-glucosamine: step 1/6. In terms of biological role, involved in the biosynthesis of lipid A, a phosphorylated glycolipid that anchors the lipopolysaccharide to the outer membrane of the cell. The polypeptide is Acyl-[acyl-carrier-protein]--UDP-N-acetylglucosamine O-acyltransferase (Vibrio atlanticus (strain LGP32) (Vibrio splendidus (strain Mel32))).